Consider the following 113-residue polypeptide: Nucleoid-associated protein Csac_1593 (113 aa).

The protein belongs to the YbaB/EbfC family. In terms of assembly, homodimer.

The protein localises to the cytoplasm. The protein resides in the nucleoid. Functionally, binds to DNA and alters its conformation. May be involved in regulation of gene expression, nucleoid organization and DNA protection. The polypeptide is Nucleoid-associated protein Csac_1593 (Caldicellulosiruptor saccharolyticus (strain ATCC 43494 / DSM 8903 / Tp8T 6331)).